Reading from the N-terminus, the 69-residue chain is uncharacterized protein (69 aa).

This is an uncharacterized protein from Mycobacterium tuberculosis (strain ATCC 25618 / H37Rv).